A 358-amino-acid polypeptide reads, in one-letter code: Guanidino acid hydrolase, mitochondrial (358 aa).

Residues 1-36 constitute a mitochondrion transit peptide; sequence MLRLLRSSWARGLGSGVATWRPSAGLFRPGCPGIRQ. The disordered stretch occupies residues 31-56; that stretch reads CPGIRQASGASDTPHHQSPSSESPVQ. The segment covering 46–56 has biased composition (low complexity); that stretch reads HQSPSSESPVQ. Positions 168 and 193 each coordinate Mn(2+). K199 is subject to N6-acetyllysine. K223 bears the N6-acetyllysine; alternate mark. K223 bears the N6-succinyllysine; alternate mark. D284 contributes to the Mn(2+) binding site.

The protein belongs to the arginase family. Agmatinase subfamily. Mn(2+) is required as a cofactor. In terms of tissue distribution, detected only in liver.

It localises to the mitochondrion. It catalyses the reaction 3-guanidinopropanoate + H2O = urea + beta-alanine. The catalysed reaction is 4-guanidinobutanoate + H2O = urea + 4-aminobutanoate. The enzyme catalyses taurocyamine + H2O = urea + taurine. It carries out the reaction L-arginine + H2O = urea + L-ornithine. It functions in the pathway nitrogen metabolism; urea cycle; L-ornithine and urea from L-arginine: step 1/1. Functionally, hydrolyzes linear guanidino acids to form urea and the corresponding amines. Displays specificity for substrates having a negatively charged head group and short chains including taurocyamine, guanidino propanoic and butanoic acids. May protect cells by detoxifying potentially harmful amounts of guanidino acids. Metabolizes L-arginine with low efficiency. This chain is Guanidino acid hydrolase, mitochondrial (Agmat), found in Mus musculus (Mouse).